The sequence spans 79 residues: Acyl carrier protein (79 aa).

A Carrier domain is found at 2–77 (SDIEQRVKKI…QAIDYAKAHV (76 aa)). At Ser-37 the chain carries O-(pantetheine 4'-phosphoryl)serine.

Belongs to the acyl carrier protein (ACP) family. 4'-phosphopantetheine is transferred from CoA to a specific serine of apo-ACP by AcpS. This modification is essential for activity because fatty acids are bound in thioester linkage to the sulfhydryl of the prosthetic group.

It localises to the cytoplasm. It participates in lipid metabolism; fatty acid biosynthesis. Functionally, carrier of the growing fatty acid chain in fatty acid biosynthesis. This is Acyl carrier protein from Janthinobacterium sp. (strain Marseille) (Minibacterium massiliensis).